A 134-amino-acid chain; its full sequence is Protein PsiB (134 aa).

In terms of biological role, could be involved directly or indirectly in exopolysaccharide synthesis. The sequence is that of Protein PsiB (psiB) from Rhizobium leguminosarum bv. phaseoli.